Consider the following 201-residue polypeptide: Recombination protein RecR (201 aa).

The C4-type zinc finger occupies 57–72; the sequence is CKYCRTFTEQEQCTIC. The Toprim domain occupies 81-176; it reads GQICVVESPA…TASRIAHGVP (96 aa).

Belongs to the RecR family.

In terms of biological role, may play a role in DNA repair. It seems to be involved in an RecBC-independent recombinational process of DNA repair. It may act with RecF and RecO. The protein is Recombination protein RecR of Photorhabdus laumondii subsp. laumondii (strain DSM 15139 / CIP 105565 / TT01) (Photorhabdus luminescens subsp. laumondii).